An 84-amino-acid polypeptide reads, in one-letter code: CDC42 small effector protein 2 (84 aa).

Residues cysteine 10 and cysteine 11 are each lipidated (S-palmitoyl cysteine). The 14-residue stretch at 29–42 folds into the CRIB domain; the sequence is IGEPTNFAHTAHVG. 2 positions are modified to phosphoserine: serine 43 and serine 52.

Belongs to the CDC42SE/SPEC family. In terms of assembly, interacts with CDC42 (in GTP-bound form). Interacts weakly with RAC1 and not at all with RHOA.

It is found in the cytoplasm. The protein localises to the cytoskeleton. Its subcellular location is the cell membrane. It localises to the cell projection. The protein resides in the phagocytic cup. Probably involved in the organization of the actin cytoskeleton by acting downstream of CDC42, inducing actin filament assembly. Alters CDC42-induced cell shape changes. In activated T-cells, may play a role in CDC42-mediated F-actin accumulation at the immunological synapse. May play a role in early contractile events in phagocytosis in macrophages. The polypeptide is CDC42 small effector protein 2 (CDC42SE2) (Pongo abelii (Sumatran orangutan)).